We begin with the raw amino-acid sequence, 539 residues long: CTP synthase (539 aa).

Positions Met1 to Leu268 are amidoligase domain. CTP is bound at residue Ser15. Ser15 provides a ligand contact to UTP. Ser16–Ile21 lines the ATP pocket. Tyr56 contributes to the L-glutamine binding site. Asp73 contacts ATP. Residues Asp73 and Glu143 each contribute to the Mg(2+) site. Residues Asp150–Glu152, Lys189–Gln194, and Lys225 each bind CTP. UTP contacts are provided by residues Lys189–Gln194 and Lys225. One can recognise a Glutamine amidotransferase type-1 domain in the interval Thr294–Lys536. Position 356 (Gly356) interacts with L-glutamine. Cys383 serves as the catalytic Nucleophile; for glutamine hydrolysis. L-glutamine contacts are provided by residues Leu384–Gln387, Glu407, and Arg464. Residues His509 and Glu511 contribute to the active site.

The protein belongs to the CTP synthase family. As to quaternary structure, homotetramer.

It carries out the reaction UTP + L-glutamine + ATP + H2O = CTP + L-glutamate + ADP + phosphate + 2 H(+). It catalyses the reaction L-glutamine + H2O = L-glutamate + NH4(+). The enzyme catalyses UTP + NH4(+) + ATP = CTP + ADP + phosphate + 2 H(+). Its pathway is pyrimidine metabolism; CTP biosynthesis via de novo pathway; CTP from UDP: step 2/2. Its activity is regulated as follows. Allosterically activated by GTP, when glutamine is the substrate; GTP has no effect on the reaction when ammonia is the substrate. The allosteric effector GTP functions by stabilizing the protein conformation that binds the tetrahedral intermediate(s) formed during glutamine hydrolysis. Inhibited by the product CTP, via allosteric rather than competitive inhibition. In terms of biological role, catalyzes the ATP-dependent amination of UTP to CTP with either L-glutamine or ammonia as the source of nitrogen. Regulates intracellular CTP levels through interactions with the four ribonucleotide triphosphates. The chain is CTP synthase from Porphyromonas gingivalis (strain ATCC BAA-308 / W83).